We begin with the raw amino-acid sequence, 72 residues long: MAKEDTIQMQGEILETLPNATFKVKLENDHIVLGHISGKMRMHYIRISPGDKVTVELTPYDLTRARIVFRAR.

The S1-like domain maps to Met-1 to Arg-72.

The protein belongs to the IF-1 family. In terms of assembly, component of the 30S ribosomal translation pre-initiation complex which assembles on the 30S ribosome in the order IF-2 and IF-3, IF-1 and N-formylmethionyl-tRNA(fMet); mRNA recruitment can occur at any time during PIC assembly.

Its subcellular location is the cytoplasm. Functionally, one of the essential components for the initiation of protein synthesis. Stabilizes the binding of IF-2 and IF-3 on the 30S subunit to which N-formylmethionyl-tRNA(fMet) subsequently binds. Helps modulate mRNA selection, yielding the 30S pre-initiation complex (PIC). Upon addition of the 50S ribosomal subunit IF-1, IF-2 and IF-3 are released leaving the mature 70S translation initiation complex. The chain is Translation initiation factor IF-1 from Neisseria gonorrhoeae (strain ATCC 700825 / FA 1090).